We begin with the raw amino-acid sequence, 152 residues long: Ribosomal RNA large subunit methyltransferase H (152 aa).

S-adenosyl-L-methionine is bound by residues L68, G100, and F119–W124.

Belongs to the RNA methyltransferase RlmH family. Homodimer.

The protein resides in the cytoplasm. The enzyme catalyses pseudouridine(1915) in 23S rRNA + S-adenosyl-L-methionine = N(3)-methylpseudouridine(1915) in 23S rRNA + S-adenosyl-L-homocysteine + H(+). Functionally, specifically methylates the pseudouridine at position 1915 (m3Psi1915) in 23S rRNA. The protein is Ribosomal RNA large subunit methyltransferase H of Rhodospirillum centenum (strain ATCC 51521 / SW).